The sequence spans 389 residues: Abscission/NoCut checkpoint regulator (389 aa).

The FYVE-type zinc-finger motif lies at M1–T58. Zn(2+)-binding residues include C5, C8, C21, C24, C29, C32, C50, and C53. S69 carries the phosphoserine modification. An MIM1-A motif is present at residues D99–E112. K132 participates in a covalent cross-link: Glycyl lysine isopeptide (Lys-Gly) (interchain with G-Cter in SUMO2). 2 disordered regions span residues P158 to Q177 and Q204 to L227. Positions Q167–Q177 are enriched in low complexity. Over residues S214–S226 the composition is skewed to polar residues. S219 carries the post-translational modification Phosphoserine. Residues S226–V261 are a coiled coil. Residues I252–Q265 carry the MIM1-B motif. Residue S280 is modified to Phosphoserine.

As to quaternary structure, interacts (via MIM1-B) with VPS4A; interaction takes place at the midbody ring following cytokinesis checkpoint activation.

It localises to the cytoplasm. Its subcellular location is the cytoskeleton. The protein localises to the microtubule organizing center. The protein resides in the centrosome. It is found in the cleavage furrow. It localises to the midbody. Its subcellular location is the midbody ring. Its function is as follows. Key regulator of abscission step in cytokinesis: part of the cytokinesis checkpoint, a process required to delay abscission to prevent both premature resolution of intercellular chromosome bridges and accumulation of DNA damage. Together with CHMP4C, required to retain abscission-competent VPS4 (VPS4A and/or VPS4B) at the midbody ring until abscission checkpoint signaling is terminated at late cytokinesis. Deactivation of AURKB results in dephosphorylation of CHMP4C followed by its dissociation from ZFYVE19/ANCHR and VPS4 and subsequent abscission. The protein is Abscission/NoCut checkpoint regulator (Zfyve19) of Mus musculus (Mouse).